A 1705-amino-acid chain; its full sequence is Rho guanine nucleotide exchange factor 28 (1705 aa).

Disordered stretches follow at residues 287–316 (RPEE…SAAE) and 473–524 (KKRS…ETNT). Residues Ser313 and Ser478 each carry the phosphoserine modification. Residues 501 to 510 (PGSQSSSRTG) show a composition bias toward polar residues. The residue at position 624 (Ser624) is a Phosphoserine. The segment at 630–649 (MTSPRNKSKTKSKDAKDKEK) is disordered. Residues 640–649 (KSKDAKDKEK) are compositionally biased toward basic and acidic residues. The segment at 652-699 (RHQFAPGTFSGVLQCLVCDKTLLGKESLQCSNCNANVHKGCKDAAPAC) adopts a Phorbol-ester/DAG-type zinc-finger fold. Polar residues-rich tracts occupy residues 710-721 (NKPQTILGNSSF) and 759-775 (VPGT…TSLE). The disordered stretch occupies residues 710–800 (NKPQTILGNS…ELLQSMGSSP (91 aa)). Residues 777–791 (ESDHNSCRSRSHSDE) are compositionally biased toward basic and acidic residues. Residues 849–1044 (KRQDVIFELM…KDMIATVDLK (196 aa)) form the DH domain. The region spanning 1086-1188 (TLLYDGLVYW…WMRRIQQAVE (103 aa)) is the PH domain. The segment at 1187 to 1207 (VESCPEEKGGRTSESDEDKRK) is disordered. A compositionally biased stretch (basic and acidic residues) spans 1191-1207 (PEEKGGRTSESDEDKRK). Residues 1295-1304 (AVSQSCEDSC) are interaction with PTK2/FAK1; required for regulation of axonal branching and synapse formation. Residues 1312–1339 (TLSSHDVPGSPTASLVTGGREGRGCSDV) are disordered. Residues 1372–1383 (IIQAIQNLTRLL) are mediates cytoplasmic retention and interaction with YWHAH. Residues 1425–1705 (QKSRDADRQH…DGAKENIVYL (281 aa)) form an interaction with microtubules region. Positions 1488–1525 (RSRGELDLQLQEYQHSLERLREGQRLVEREQARMRAQQ) form a coiled coil. The RNA-binding stretch occupies residues 1496–1527 (QLQEYQHSLERLREGQRLVEREQARMRAQQSL). The residue at position 1538 (Ser1538) is a Phosphoserine. Positions 1566-1579 (FINEALVQMSFNTF) are mediates cytoplasmic retention and interaction with MAPK8IP1. The tract at residues 1638–1705 (PFHESSKDSC…DGAKENIVYL (68 aa)) is disordered. The segment covering 1641–1655 (ESSKDSCKNDLDTSH) has biased composition (basic and acidic residues). Over residues 1656-1669 (TESPTPHDSNSHRP) the composition is skewed to polar residues. Residues 1688–1699 (TRQDGETGDGAK) are compositionally biased toward basic and acidic residues.

In terms of assembly, homooligomer; forms cytoplasmic aggregates. Forms a complex with MAPK8 and MAPK8IP1. Interacts with RHOA. Interacts with microtubules. Interacts with YWHAE and YWHAH. Interacts with PTK2/FAK1. Interacts with NEFL. Interacts with CTNND2; prevents interaction with RHOA. In terms of processing, phosphorylated on tyrosine upon stimulation of cells by laminin.

It localises to the cytoplasm. The protein localises to the cell membrane. Its function is as follows. Functions as a RHOA-specific guanine nucleotide exchange factor regulating signaling pathways downstream of integrins and growth factor receptors. Functions in axonal branching, synapse formation and dendritic morphogenesis. Also functions in focal adhesion formation, cell motility and B-lymphocytes activation. May regulate NEFL expression and aggregation and play a role in apoptosis. The chain is Rho guanine nucleotide exchange factor 28 (ARHGEF28) from Homo sapiens (Human).